Reading from the N-terminus, the 405-residue chain is CCA-adding enzyme (405 aa).

Residues Gly8 and Arg11 each coordinate ATP. CTP-binding residues include Gly8 and Arg11. Residues Glu21 and Asp23 each contribute to the Mg(2+) site. ATP contacts are provided by Arg91, Arg137, and Arg140. CTP-binding residues include Arg91, Arg137, and Arg140. In terms of domain architecture, HD spans 220–326 (PLSHGLSTLS…LNFFDELDLW (107 aa)).

Belongs to the tRNA nucleotidyltransferase/poly(A) polymerase family. Bacterial CCA-adding enzyme type 2 subfamily. Mg(2+) is required as a cofactor.

The enzyme catalyses a tRNA precursor + 2 CTP + ATP = a tRNA with a 3' CCA end + 3 diphosphate. It catalyses the reaction a tRNA with a 3' CCA end + 2 CTP + ATP = a tRNA with a 3' CCACCA end + 3 diphosphate. Its function is as follows. Catalyzes the addition and repair of the essential 3'-terminal CCA sequence in tRNAs without using a nucleic acid template. Adds these three nucleotides in the order of C, C, and A to the tRNA nucleotide-73, using CTP and ATP as substrates and producing inorganic pyrophosphate. tRNA 3'-terminal CCA addition is required both for tRNA processing and repair. Also involved in tRNA surveillance by mediating tandem CCA addition to generate a CCACCA at the 3' terminus of unstable tRNAs. While stable tRNAs receive only 3'-terminal CCA, unstable tRNAs are marked with CCACCA and rapidly degraded. The protein is CCA-adding enzyme of Hamiltonella defensa subsp. Acyrthosiphon pisum (strain 5AT).